We begin with the raw amino-acid sequence, 145 residues long: Large ribosomal subunit protein mL43 (145 aa).

This sequence belongs to the mitochondrion-specific ribosomal protein mL43 family. Component of the mitochondrial large ribosomal subunit (mt-LSU). Mature yeast 74S mitochondrial ribosomes consist of a small (37S) and a large (54S) subunit. The 37S small subunit contains a 15S ribosomal RNA (15S mt-rRNA) and at least 32 different proteins. The 54S large subunit contains a 21S rRNA (21S mt-rRNA) and at least 45 different proteins.

Its subcellular location is the mitochondrion. Component of the mitochondrial ribosome (mitoribosome), a dedicated translation machinery responsible for the synthesis of mitochondrial genome-encoded proteins, including at least some of the essential transmembrane subunits of the mitochondrial respiratory chain. The mitoribosomes are attached to the mitochondrial inner membrane and translation products are cotranslationally integrated into the membrane. Also has an extraribosomal function, being essential for mitochondrial genome integrity. May interact with MHR1 to take part in the mtDNA repair mechanism. This chain is Large ribosomal subunit protein mL43 (mrpl51), found in Schizosaccharomyces pombe (strain 972 / ATCC 24843) (Fission yeast).